The following is a 433-amino-acid chain: MGGSSSKESPRGGGSGRRYERSVSGSSSYSSAWDQSSYYQTPNHPSASPVSSYNSGRQTPKNLERKYSRIADNYRSIDEVTAALSHAGLESSNLIVGIDVTKSNEWTGARSFGRKSLHFIGTTPNPYQQAISIIGKTLSVFDEDNLIPCYGFGDATTHDQDVFSFNPNDTYCNGFEEVLMCYREIVPQLRLSGPTSFAPIIERAMTIVEESGGQYHVLLIIADGQVTRSVDTDNGGFSPQEQQTIDAIVRASEYPLSIVLVGVGDGPWDTMRQFDDNIPARAFDNFQFVNFTDIMSKNIDPARKEAEFALSALMEIPSQYKATLELGLLGQRTGHCPDRIALPPPTYATQSMRNSPRTSRSTSFQNKPYDNGVSSTPPSTTHNESQQQFCPVCLVSAKNMAFNCGHQTCAGCGEDLHVCPICRSSISVRIKLY.

The tract at residues 1-61 (MGGSSSKESP…SYNSGRQTPK (61 aa)) is disordered. Residue Gly2 is the site of N-myristoyl glycine attachment. The segment covering 22 to 39 (SVSGSSSYSSAWDQSSYY) has biased composition (low complexity). The span at 40–61 (QTPNHPSASPVSSYNSGRQTPK) shows a compositional bias: polar residues. A VWFA domain is found at 93-313 (NLIVGIDVTK…KEAEFALSAL (221 aa)). The tract at residues 340–383 (IALPPPTYATQSMRNSPRTSRSTSFQNKPYDNGVSSTPPSTTHN) is disordered. Positions 347–383 (YATQSMRNSPRTSRSTSFQNKPYDNGVSSTPPSTTHN) are enriched in polar residues. The RING-type zinc-finger motif lies at 390–423 (CPVCLVSAKNMAFNCGHQTCAGCGEDLHVCPICR).

In terms of assembly, interacts with PP2CA. In terms of processing, N-myristoylated.

It is found in the cell membrane. It carries out the reaction S-ubiquitinyl-[E2 ubiquitin-conjugating enzyme]-L-cysteine + [acceptor protein]-L-lysine = [E2 ubiquitin-conjugating enzyme]-L-cysteine + N(6)-ubiquitinyl-[acceptor protein]-L-lysine.. Together with RGLG1, mediates the ubiquitination and subsequent proteasomal degradation of the target protein PP2CA. Functions as a positive regulator of abscisic acid (ABA) signaling through ABA-dependent degradation of PP2CA, a major inhibitor of ABA signaling. This chain is E3 ubiquitin-protein ligase RGLG5, found in Arabidopsis thaliana (Mouse-ear cress).